The primary structure comprises 220 residues: Lactate utilization protein C (220 aa).

This sequence belongs to the LutC/YkgG family.

Its function is as follows. Is involved in L-lactate degradation and allows cells to grow with lactate as the sole carbon source. This Anoxybacillus flavithermus (strain DSM 21510 / WK1) protein is Lactate utilization protein C.